An 851-amino-acid chain; its full sequence is UPF0182 protein CYA_1810 (851 aa).

7 consecutive transmembrane segments (helical) span residues 7–27, 47–67, 76–96, 141–161, 168–188, 220–240, and 259–279; these read GLVL…LASF, VLAR…VVGS, ASTA…AWSL, FNLV…ELGL, LALS…LFLL, LPAT…FWAL, and WASS…FGLL.

The protein belongs to the UPF0182 family.

The protein resides in the cell membrane. The protein is UPF0182 protein CYA_1810 of Synechococcus sp. (strain JA-3-3Ab) (Cyanobacteria bacterium Yellowstone A-Prime).